We begin with the raw amino-acid sequence, 44 residues long: VVGGDECNINEHRFLVALYANSSLLCGGTLINQEWVLIAAHCDR.

Residues 1–44 (VVGGDECNINEHRFLVALYANSSLLCGGTLINQEWVLIAAHCDR) enclose the Peptidase S1 domain. Cys26 and Cys42 are oxidised to a cystine. His41 acts as the Charge relay system in catalysis.

The protein belongs to the peptidase S1 family. Snake venom subfamily. As to quaternary structure, monomer. Contains 6 disulfide bonds. As to expression, expressed by the venom gland.

It is found in the secreted. With respect to regulation, enzyme activity is markedly inhibited by TLCK and PMSF, and moderately by SBTi. Platelet aggregating activity is strongly inhibited by TLCK. Thrombin-like snake venom serine protease that coagulates fibrinogen by inducing a fast degradation of the alpha chain (FGA) from human citrated plasma, and a slow degradation of beta chain (FGB). Potently induces platelet aggregation in both platelet rich plasma and washed platelet preparations in a concentration-dependent fashion. Shows amidolytic activities. The protein is Thrombin-like enzyme F202 of Crotalus durissus cascavella (Northeastern Brazilian rattlesnake).